The primary structure comprises 83 residues: Mitochondrial import inner membrane translocase subunit Tim8 (83 aa).

The Twin CX3C motif motif lies at 35–60 (CWDVCFSDYRPPSKMDGKTQTCIQNC). 2 disulfide bridges follow: C35–C60 and C39–C56.

The protein belongs to the small Tim family. In terms of assembly, heterohexamer; composed of 3 copies of ddp-1/tim-8 and 3 copies of tin-13/tim-13, named soluble 70 kDa complex. Associates with the TIM22 complex, whose core is composed of tim-22.

Its subcellular location is the mitochondrion inner membrane. In terms of biological role, mitochondrial intermembrane chaperone that participates in the import and insertion of some multi-pass transmembrane proteins into the mitochondrial inner membrane. Also required for the transfer of beta-barrel precursors from the TOM complex to the sorting and assembly machinery (SAM complex) of the outer membrane. Acts as a chaperone-like protein that protects the hydrophobic precursors from aggregation and guide them through the mitochondrial intermembrane space. The ddp-1/tim-8-tim-13 complex mediates the import of some proteins while the predominant tim-9/tin-9.1-tim-10/tin-10 70 kDa complex mediates the import of much more proteins. This is Mitochondrial import inner membrane translocase subunit Tim8 from Caenorhabditis briggsae.